The sequence spans 212 residues: Outer-membrane lipoprotein LolB (212 aa).

The first 16 residues, 1-16 (MACRSWVLGILLVLVG), serve as a signal peptide directing secretion. A lipid anchor (N-palmitoyl cysteine) is attached at Cys-17. The S-diacylglycerol cysteine moiety is linked to residue Cys-17.

The protein belongs to the LolB family. As to quaternary structure, monomer.

It localises to the cell outer membrane. Plays a critical role in the incorporation of lipoproteins in the outer membrane after they are released by the LolA protein. The chain is Outer-membrane lipoprotein LolB from Nitrosomonas europaea (strain ATCC 19718 / CIP 103999 / KCTC 2705 / NBRC 14298).